The sequence spans 1265 residues: 5-oxoprolinase (1265 aa).

This sequence belongs to the oxoprolinase family. In terms of assembly, homodimer.

The protein localises to the cytoplasm. The protein resides in the cytosol. The enzyme catalyses 5-oxo-L-proline + ATP + 2 H2O = L-glutamate + ADP + phosphate + H(+). Functionally, catalyzes the cleavage of 5-oxo-L-proline to form L-glutamate coupled to the hydrolysis of ATP to ADP and inorganic phosphate. This chain is 5-oxoprolinase (oplah), found in Dictyostelium discoideum (Social amoeba).